The chain runs to 135 residues: Large ribosomal subunit protein uL16c (135 aa).

It belongs to the universal ribosomal protein uL16 family. In terms of assembly, part of the 50S ribosomal subunit.

Its subcellular location is the plastid. The protein localises to the chloroplast. This is Large ribosomal subunit protein uL16c from Phaseolus vulgaris (Kidney bean).